The chain runs to 211 residues: Beta-crystallin B3 (211 aa).

At Met1 the chain carries N-acetylmethionine. Position 2 is an N-acetylalanine; in Beta-crystallin B3, N-terminally processed (Ala2). The segment at 2–23 is N-terminal arm; it reads AEQHGAPEQAAAGKSHGDLGGS. 2 consecutive Beta/gamma crystallin 'Greek key' domains span residues 24-63 and 64-108; these read YKVI…QVES and GPWL…RPLN. Positions 109-113 are connecting peptide; sequence IDSPH. 2 consecutive Beta/gamma crystallin 'Greek key' domains span residues 114 to 155 and 156 to 198; these read HKLH…RAIN and GTWV…RRIR. Residues 200–211 are C-terminal arm; that stretch reads QKWHKRGRFPSS.

It belongs to the beta/gamma-crystallin family. As to quaternary structure, homo/heterodimer, or complexes of higher-order. The structure of beta-crystallin oligomers seems to be stabilized through interactions between the N-terminal arms.

Its function is as follows. Crystallins are the dominant structural components of the vertebrate eye lens. The protein is Beta-crystallin B3 (CRYBB3) of Homo sapiens (Human).